The sequence spans 239 residues: Myogenic factor 6 (239 aa).

The tract at residues 27 to 64 (QHLDMPGVSPLYDGNHSPLSPGPDNVPSETGGESSGDE) is disordered. A bHLH domain is found at 96-147 (DRRKAATLRERRRLKKINEAFDALKRKSVANPNQRLPKVEILRSAISYIERL). The segment at 155-184 (DEQERGQSGASDTRNDKEQNRPSGGDYCWK) is disordered.

Efficient DNA binding requires dimerization with another bHLH protein.

Its subcellular location is the nucleus. Its function is as follows. Involved in muscle differentiation (myogenic factor). Induces fibroblasts to differentiate into myoblasts. Probable sequence specific DNA-binding protein. This chain is Myogenic factor 6 (myf6), found in Tetraodon nigroviridis (Spotted green pufferfish).